The primary structure comprises 122 residues: MTSTVEFINRWQRIALLSQSLLELAQRGEWDLLLQQEVSYLQSIETVMEKQTPPGITRSIQDMVAGYIKQTLDNEQLLKGLLQQRLDELSSLIGQSTRQKSLNNAYGRLSGMLLVPDAPGAS.

A required for homodimerization region spans residues 1-50 (MTSTVEFINRWQRIALLSQSLLELAQRGEWDLLLQQEVSYLQSIETVMEK). Positions 60-98 (IQDMVAGYIKQTLDNEQLLKGLLQQRLDELSSLIGQSTR) are fliD binding.

Belongs to the FliT family. As to quaternary structure, homodimer. Interacts with FliD and FlhC.

It is found in the cytoplasm. It localises to the cytosol. In terms of biological role, dual-function protein that regulates the transcription of class 2 flagellar operons and that also acts as an export chaperone for the filament-capping protein FliD. As a transcriptional regulator, acts as an anti-FlhDC factor; it directly binds FlhC, thus inhibiting the binding of the FlhC/FlhD complex to class 2 promoters, resulting in decreased expression of class 2 flagellar operons. As a chaperone, effects FliD transition to the membrane by preventing its premature polymerization, and by directing it to the export apparatus. The polypeptide is Flagellar protein FliT (Salmonella schwarzengrund (strain CVM19633)).